A 90-amino-acid polypeptide reads, in one-letter code: Small ribosomal subunit protein uS17 (90 aa).

The protein belongs to the universal ribosomal protein uS17 family. In terms of assembly, part of the 30S ribosomal subunit.

Functionally, one of the primary rRNA binding proteins, it binds specifically to the 5'-end of 16S ribosomal RNA. The sequence is that of Small ribosomal subunit protein uS17 from Cutibacterium acnes (strain DSM 16379 / KPA171202) (Propionibacterium acnes).